The following is a 236-amino-acid chain: Movement and silencing protein TGBp1 (236 aa).

Residues 1–117 enclose the (+)RNA virus helicase ATP-binding domain; that stretch reads MDHIHHLLSS…DNLFEPHYTL (117 aa). The 119-residue stretch at 118–236 folds into the (+)RNA virus helicase C-terminal domain; it reads EITYRFGPNT…LGPDAFDSSP (119 aa).

Belongs to the Tymovirales TGBp1 protein family. As to quaternary structure, homodimer and homooligomer. Interacts with capsid protein. Interacts with host AGO1; this interaction targets the host protein for degradation, thereby suppressing the antiviral RNA silencing.

Its subcellular location is the host cytoplasm. Functionally, transports viral genome to neighboring plant cells directly through plasmosdesmata, without any budding. The movement protein allows efficient cell to cell propagation, by bypassing the host cell wall barrier. Increases plasmodesma size exclusion limit. Acts as a suppressor of RNA-mediated gene silencing, also known as post-transcriptional gene silencing (PTGS), a mechanism of plant viral defense that limits the accumulation of viral RNAs. The chain is Movement and silencing protein TGBp1 from White clover mosaic virus (strain O) (WCMV).